A 127-amino-acid polypeptide reads, in one-letter code: uncharacterized protein (127 aa).

The first 16 residues, 1-16, serve as a signal peptide directing secretion; that stretch reads MIKKIIFGIAILLSTS. Cys-17 is lipidated: N-palmitoyl cysteine. The S-diacylglycerol cysteine moiety is linked to residue Cys-17. A coiled-coil region spans residues 56–101; the sequence is EVREEIQKYRVAIVKINKKKRELYNRLSKEAQNFLAEQQKYKQKLS. The segment covering 107–118 has biased composition (polar residues); it reads VENDQKNNTADS. The interval 107-127 is disordered; sequence VENDQKNNTADSNDNKSKDTK.

The protein resides in the cell membrane. This is an uncharacterized protein from Rickettsia conorii (strain ATCC VR-613 / Malish 7).